The sequence spans 366 residues: Chorismate synthase (366 aa).

Arginine 46 lines the NADP(+) pocket. Residues 122 to 124 (RSS), 243 to 244 (NG), glycine 284, 299 to 303 (KPTPS), and arginine 325 each bind FMN.

It belongs to the chorismate synthase family. As to quaternary structure, homotetramer. Requires FMNH2 as cofactor.

It carries out the reaction 5-O-(1-carboxyvinyl)-3-phosphoshikimate = chorismate + phosphate. Its pathway is metabolic intermediate biosynthesis; chorismate biosynthesis; chorismate from D-erythrose 4-phosphate and phosphoenolpyruvate: step 7/7. Its function is as follows. Catalyzes the anti-1,4-elimination of the C-3 phosphate and the C-6 proR hydrogen from 5-enolpyruvylshikimate-3-phosphate (EPSP) to yield chorismate, which is the branch point compound that serves as the starting substrate for the three terminal pathways of aromatic amino acid biosynthesis. This reaction introduces a second double bond into the aromatic ring system. The chain is Chorismate synthase from Campylobacter hominis (strain ATCC BAA-381 / DSM 21671 / CCUG 45161 / LMG 19568 / NCTC 13146 / CH001A).